A 245-amino-acid chain; its full sequence is Biosynthetic peptidoglycan transglycosylase (245 aa).

A helical membrane pass occupies residues 20 to 42 (VYAGSVFAGAWLATQLFYLAQIA).

Belongs to the glycosyltransferase 51 family.

The protein localises to the cell inner membrane. It carries out the reaction [GlcNAc-(1-&gt;4)-Mur2Ac(oyl-L-Ala-gamma-D-Glu-L-Lys-D-Ala-D-Ala)](n)-di-trans,octa-cis-undecaprenyl diphosphate + beta-D-GlcNAc-(1-&gt;4)-Mur2Ac(oyl-L-Ala-gamma-D-Glu-L-Lys-D-Ala-D-Ala)-di-trans,octa-cis-undecaprenyl diphosphate = [GlcNAc-(1-&gt;4)-Mur2Ac(oyl-L-Ala-gamma-D-Glu-L-Lys-D-Ala-D-Ala)](n+1)-di-trans,octa-cis-undecaprenyl diphosphate + di-trans,octa-cis-undecaprenyl diphosphate + H(+). It functions in the pathway cell wall biogenesis; peptidoglycan biosynthesis. Functionally, peptidoglycan polymerase that catalyzes glycan chain elongation from lipid-linked precursors. The sequence is that of Biosynthetic peptidoglycan transglycosylase from Burkholderia cenocepacia (strain HI2424).